The primary structure comprises 267 residues: Phosphoethanolamine/phosphocholine phosphatase (267 aa).

Catalysis depends on D32, which acts as the Nucleophile. Mg(2+)-binding residues include D32 and D34. Catalysis depends on D34, which acts as the Proton donor. D43 and D123 together coordinate substrate. D203 is a Mg(2+) binding site.

Belongs to the HAD-like hydrolase superfamily. PHOSPHO family. Requires Mg(2+) as cofactor. Expressed at sites of mineralization in bone and cartilage. Highly expressed in osteoblast cell line SaOS-2 which produces a mineralized matrix, but not in MG-63 cell line, which do not mineralize.

It is found in the extracellular vesicle. The catalysed reaction is phosphoethanolamine + H2O = ethanolamine + phosphate. It carries out the reaction phosphocholine + H2O = choline + phosphate. In terms of biological role, phosphatase that has a high activity toward phosphoethanolamine (PEA) and phosphocholine (PCho). Involved in the generation of inorganic phosphate for bone mineralization. Acts in a non-redundant manner with PHOSPHO1 in skeletal mineralization: while PHOSPHO1 mediates the initiation of hydroxyapatite crystallization in the matrix vesicles (MVs), ALPL/TNAP catalyzes the spread of hydroxyapatite crystallization in the extracellular matrix. The chain is Phosphoethanolamine/phosphocholine phosphatase from Homo sapiens (Human).